The chain runs to 684 residues: Probable Xaa-Pro aminopeptidase P (684 aa).

Positions 481, 492, 590, and 604 each coordinate Mn(2+).

It belongs to the peptidase M24B family. The cofactor is Mn(2+).

The catalysed reaction is Release of any N-terminal amino acid, including proline, that is linked to proline, even from a dipeptide or tripeptide.. Catalyzes the removal of a penultimate prolyl residue from the N-termini of peptides. In Neurospora crassa (strain ATCC 24698 / 74-OR23-1A / CBS 708.71 / DSM 1257 / FGSC 987), this protein is Probable Xaa-Pro aminopeptidase P (ampp).